The chain runs to 357 residues: Probable GTP 3',8-cyclase (357 aa).

Residues 5-234 form the Radical SAM core domain; that stretch reads DFGRDVSGVR…DRRRYWVSSR (230 aa). A GTP-binding site is contributed by R14. [4Fe-4S] cluster contacts are provided by C21 and C25. Y27 lines the S-adenosyl-L-methionine pocket. C28 contacts [4Fe-4S] cluster. K68 is a GTP binding site. G72 serves as a coordination point for S-adenosyl-L-methionine. Residue T96 coordinates GTP. S120 provides a ligand contact to S-adenosyl-L-methionine. Residue K157 coordinates GTP. Residues 232–256 are disordered; that stretch reads SSRDAGSTADDAAQSVTPDGGAHPD. [4Fe-4S] cluster is bound by residues C272 and C275. 277-279 is a GTP binding site; it reads RVR. C289 contributes to the [4Fe-4S] cluster binding site.

It belongs to the radical SAM superfamily. MoaA family. The cofactor is [4Fe-4S] cluster.

The enzyme catalyses GTP + AH2 + S-adenosyl-L-methionine = (8S)-3',8-cyclo-7,8-dihydroguanosine 5'-triphosphate + 5'-deoxyadenosine + L-methionine + A + H(+). It functions in the pathway cofactor biosynthesis; molybdopterin biosynthesis. In terms of biological role, catalyzes the cyclization of GTP to (8S)-3',8-cyclo-7,8-dihydroguanosine 5'-triphosphate. This is Probable GTP 3',8-cyclase from Halobacterium salinarum (strain ATCC 29341 / DSM 671 / R1).